The primary structure comprises 3010 residues: Genome polyprotein (3010 aa).

An N-acetylserine; by host modification is found at Ser2. An interaction with STAT1 region spans residues 2 to 23 (STNPKPQRKTKRNTNRRPQDVK). The segment at 2–58 (STNPKPQRKTKRNTNRRPQDVKFPGGGQIVGGVYLLPRRGPRLGVRATRKASERSQP) is interaction with EIF2AK2/PKR. The interval 2-59 (STNPKPQRKTKRNTNRRPQDVKFPGGGQIVGGVYLLPRRGPRLGVRATRKASERSQPR) is interaction with DDX3X. The segment at 2-75 (STNPKPQRKT…PKARRPEGRA (74 aa)) is disordered. At 2–168 (STNPKPQRKT…EDGVNYATGN (167 aa)) the chain is on the cytoplasmic side. 2 consecutive short sequence motifs (nuclear localization signal) follow at residues 5 to 13 (PKPQRKTKR) and 38 to 43 (PRRGPR). Residues 7-16 (PQRKTKRNTN) show a composition bias toward basic residues. The segment covering 32-47 (GGVYLLPRRGPRLGVR) has biased composition (low complexity). Residue Ser53 is modified to Phosphoserine; by host. Short sequence motifs (nuclear localization signal) lie at residues 58-64 (PRGRRQP) and 66-71 (PKARRP). Positions 58–68 (PRGRRQPIPKA) are enriched in basic residues. Position 99 is a phosphoserine; by host (Ser99). The interval 112-152 (PRRRSRNLGKVIDTLTCGFADLMGYIPLVGAPLGGAARALA) is important for endoplasmic reticulum and mitochondrial localization. Ser116 is subject to Phosphoserine; by host PKA. The interval 122–173 (VIDTLTCGFADLMGYIPLVGAPLGGAARALAHGVRVLEDGVNYATGNLPGCS) is interaction with APOA2. Positions 164-167 (YATG) are important for lipid droplets localization. A helical membrane pass occupies residues 169-189 (LPGCSFSIFLLALLSCLTIPA). Positions 178-191 (LLALLSCLTIPASA) are cleaved as a propeptide — ER anchor for the core protein, removed in mature form by host signal peptidase. Topologically, residues 190–358 (SAYEVRNVSG…AGAHWGVLAG (169 aa)) are lumenal. Asn196, Asn209, Asn234, and Asn250 each carry an N-linked (GlcNAc...) asparagine; by host glycan. The important for fusion stretch occupies residues 265–296 (LVGTAAFCSAMYVGDLCGSIFLVSQLFTFSPR). N-linked (GlcNAc...) asparagine; by host glycosylation occurs at Asn305. Residues 359–379 (LAYYSMVGNWAKVLIVALLFA) traverse the membrane as a helical segment. At 380–725 (GVDGETHTTG…WEYILLLFLL (346 aa)) the chain is on the lumenal side. The segment at 385–411 (THTTGRVAGHTTSGFTSLFSSGASQKI) is HVR1. Asn417, Asn423, Asn430, and Asn448 each carry an N-linked (GlcNAc...) (high mannose) asparagine; by host glycan. Cystine bridges form between Cys429–Cys552, Cys452–Cys459, Cys486–Cys494, and Cys503–Cys508. The tract at residues 474–479 (YTKPNS) is HVR2. Residue Asn478 is glycosylated (N-linked (GlcNAc...) asparagine; by host). A CD81-binding 1 region spans residues 480 to 493 (SDQRPYCWHYAPRP). Asn532 is a glycosylation site (N-linked (GlcNAc...) (high mannose) asparagine; by host). An N-linked (GlcNAc...) asparagine; by host glycan is attached at Asn540. A CD81-binding 2 region spans residues 544 to 551 (PPQGNWFG). Residue Asn556 is glycosylated (N-linked (GlcNAc...) (high mannose) asparagine; by host). Cysteines 564 and 569 form a disulfide. The N-linked (GlcNAc...) (high mannose) asparagine; by host glycan is linked to Asn576. Intrachain disulfides connect Cys581–Cys585, Cys597–Cys620, and Cys607–Cys644. Asn623 and Asn645 each carry an N-linked (GlcNAc...) (high mannose) asparagine; by host glycan. Cys652 and Cys677 are disulfide-bonded. The PKR/eIF2-alpha phosphorylation homology domain (PePHD) stretch occupies residues 660–671 (SELSPLLLSTTE). A helical membrane pass occupies residues 726–746 (LADARVCACLWMMLLIAQAEA). Residues 747-757 (ALENLVVLNAA) are Lumenal-facing. A helical transmembrane segment spans residues 758-778 (SVAGAHGILSFLVFFCAAWYI). Over 779–781 (KGR) the chain is Cytoplasmic. A helical membrane pass occupies residues 782–803 (LAPGAAYAFYGVWPLLLLLLAL). Topologically, residues 804–813 (PPRAYALDRE) are lumenal. Residues 814 to 834 (MAASCGGAVLVGLVFLTLSPY) form a helical membrane-spanning segment. The Cytoplasmic segment spans residues 835 to 838 (YKVF). The helical transmembrane segment at 839-859 (LTRLIWWLQYFITRAEAHMQV) threads the bilayer. The Lumenal portion of the chain corresponds to 860–881 (WVPPLNVRGGRDAIILLTCAVH). Residues 882–902 (PELIFDITKLLLAILGPLMVL) form a helical membrane-spanning segment. Residues 903-1026 (QAGITRVPYF…SLEGQGWRLL (124 aa)) enclose the Peptidase C18 domain. The Cytoplasmic portion of the chain corresponds to 903-1657 (QAGITRVPYF…CMSADLEVVT (755 aa)). A protease NS2-3 region spans residues 904 to 1206 (AGITRVPYFV…PVESMETTMR (303 aa)). Residue Cys922 is the site of S-palmitoyl cysteine; by host attachment. The interaction with host SCPS1 stretch occupies residues 929–949 (AGGHYVQMAFMKLGALTGTYV). Catalysis depends on for protease NS2 activity; shared with dimeric partner residues His952, Glu972, and Cys993. The Peptidase S29 domain maps to 1027 to 1208 (APITAYSQQT…ESMETTMRSP (182 aa)). Active-site charge relay system; for serine protease NS3 activity residues include His1083 and Asp1107. Zn(2+)-binding residues include Cys1123 and Cys1125. Ser1165 acts as the Charge relay system; for serine protease NS3 activity in catalysis. Zn(2+)-binding residues include Cys1171 and His1175. Residues 1217-1369 (PAVPQTFQVA…PNIEEIGLSN (153 aa)) enclose the Helicase ATP-binding domain. Residue 1230-1237 (APTGSGKS) coordinates ATP. Ser1237 and Glu1317 together coordinate Mg(2+). Positions 1316-1319 (DECH) match the DECH box motif. Residues 1486 to 1497 (QRRGRTGRGRSG) form an RNA-binding region. Residues 1658–1678 (STWVLVGGVLAALAAYCLTTG) form a helical membrane-spanning segment. An NS3-binding region spans residues 1679 to 1690 (SVVIVGRIILSG). Over 1679–1805 (SVVIVGRIIL…SITSPLTTQN (127 aa)) the chain is Cytoplasmic. Residues 1806 to 1824 (TLLFNILGGWVAAQLAPPS) form a helical membrane-spanning segment. The Lumenal segment spans residues 1825–1828 (AASA). A helical transmembrane segment spans residues 1829 to 1849 (FVGAGIAGAAVGSIGLGKVLV). Position 1850 (Asp1850) is a topological domain, cytoplasmic. A helical transmembrane segment spans residues 1851–1871 (ILAGYGAGVAGALVAFKVMSG). The Lumenal segment spans residues 1872–1881 (EVPSTEDLVN). Residues 1882–1902 (LLPAILSPGALVVGVVCAAIL) form a helical membrane-spanning segment. Residues 1903–1972 (RRHVGPGEGA…WINEDCSTPC (70 aa)) lie on the Cytoplasmic side of the membrane. Residues Cys1968 and Cys1972 are each lipidated (S-palmitoyl cysteine; by host). Residues 1973 to 2002 (SGSWLRDVWDWICTVLTDFKTWLQSKLLPR) lie within the membrane without spanning it. Residues 2003–2989 (LPGVPFLSCQ…YHSLSRARPR (987 aa)) lie on the Cytoplasmic side of the membrane. The Zn(2+) site is built by Cys2011, Cys2029, Cys2031, and Cys2052. The segment at 2120-2208 (EFFTEVDGVR…ASSSASQLSA (89 aa)) is FKBP8-binding. The interval 2120 to 2332 (EFFTEVDGVR…PIPPPRRKRT (213 aa)) is transcriptional activation. The interval 2135–2139 (PACKP) is interaction with non-structural protein 4A. The interval 2187–2219 (KRRLARGSPPSLASSSASQLSAPSLKATCTTHH) is disordered. The segment at 2189-2441 (RLARGSPPSL…PCAAEESKLP (253 aa)) is interaction with host SKP2. Phosphoserine; by host; in p56 is present on Ser2194. Low complexity predominate over residues 2194–2211 (SPPSLASSSASQLSAPSL). 5 positions are modified to phosphoserine; by host; in p58: Ser2197, Ser2201, Ser2204, Ser2207, and Ser2210. The segment at 2210-2249 (SLKATCTTHHDSPDADLIEANLLWRQEMGGNITRVESENK) is ISDR. The segment at 2210–2275 (SLKATCTTHH…REISVAAEIL (66 aa)) is interaction with EIF2AK2/PKR. Residues 2249-2306 (KVVILDSFEPLHAEGDEREISVAAEILRKSRKFPSALPIWARPDYNPPLLESWKDPDY) form an NS4B-binding region. Residues 2322 to 2325 (PPIP) carry the SH3-binding motif. Residues 2326 to 2334 (PPRRKRTVV) carry the Nuclear localization signal motif. Lys2350 is covalently cross-linked (Glycyl lysine isopeptide (Lys-Gly) (interchain with G-Cter in ubiquitin)). Residues 2351 to 2365 (TFGSSGSSAVDSGTA) show a composition bias toward polar residues. Residues 2351–2407 (TFGSSGSSAVDSGTATALPDLASDDGDKGSDVESYSSMPPLEGEPGDPDLSDGSWST) form a disordered region. The V3 stretch occupies residues 2354–2377 (SSGSSAVDSGTATALPDLASDDGD). Phosphoserine; by host is present on residues Ser2448 and Ser2461. One can recognise a RdRp catalytic domain in the interval 2633-2751 (PMGFSYDTRC…ICESAGTQED (119 aa)). Residues Asp2639, Asp2737, and Asp2738 each contribute to the Mg(2+) site. A helical transmembrane segment spans residues 2990 to 3010 (WFPLCLLLLSVGVGIYLLPNR).

This sequence belongs to the hepacivirus polyprotein family. As to quaternary structure, homooligomer. Interacts with E1 (via C-terminus). Interacts with the non-structural protein 5A. Interacts (via N-terminus) with host STAT1 (via SH2 domain); this interaction results in decreased STAT1 phosphorylation and ubiquitin-mediated proteasome-dependent STAT1 degradation, leading to decreased IFN-stimulated gene transcription. Interacts with host STAT3; this interaction constitutively activates STAT3. Interacts with host LTBR receptor. Interacts with host TNFRSF1A receptor and possibly induces apoptosis. Interacts with host HNRPK. Interacts with host YWHAE. Interacts with host UBE3A/E6AP. Interacts with host DDX3X. Interacts with host APOA2. Interacts with host RXRA protein. Interacts with host SP110 isoform 3/Sp110b; this interaction sequesters the transcriptional corepressor SP110 away from the nucleus. Interacts with host CREB3 nuclear transcription protein; this interaction triggers cell transformation. Interacts with host ACY3. Interacts with host C1QR1. Interacts with host RBM24; this interaction, which enhances the interaction of the mature core protein with 5'-UTR, may inhibit viral translation and favor replication. Interacts with host EIF2AK2/PKR; this interaction induces the autophosphorylation of EIF2AK2. Part of the viral assembly initiation complex composed of NS2, E1, E2, NS3, NS4A, NS5A and the mature core protein. In terms of assembly, forms a heterodimer with envelope glycoprotein E2. Interacts with mature core protein. Interacts with protease NS2. The heterodimer E1/E2 interacts with host CLDN1; this interaction plays a role in viral entry into host cell. Interacts with host SPSB2 (via C-terminus). Part of the viral assembly initiation complex composed of NS2, E1, E2, NS3, NS4A, NS5A and the mature core protein. Interacts with host NEURL3; this interaction prevents E1 binding to glycoprotein E2. Forms a heterodimer with envelope glycoprotein E1. Interacts with host CD81 and SCARB1 receptors; these interactions play a role in viral entry into host cell. Interacts with host EIF2AK2/PKR; this interaction inhibits EIF2AK2 and probably allows the virus to evade the innate immune response. Interacts with host CD209/DC-SIGN and CLEC4M/DC-SIGNR. Interact with host SPCS1; this interaction is essential for viral particle assembly. Interacts with protease NS2. The heterodimer E1/E2 interacts with host CLDN1; this interaction plays a role in viral entry into host cell. Part of the viral assembly initiation complex composed of NS2, E1, E2, NS3, NS4A, NS5A and the mature core protein. Interacts with host SLC3A2/4F2hc; the interaction may facilitate viral entry into host cell. Interacts with human PLSCR1. As to quaternary structure, homohexamer. Homoheptamer. Interacts with protease NS2. In terms of assembly, homodimer. Interacts with host SPCS1; this interaction is essential for viral particle assembly. Interacts with envelope glycoprotein E1. Interacts with envelope glycoprotein E2. Interacts with viroporin p7. Interacts with serine protease/helicase NS3. Part of the replication complex composed of NS2, NS3, NS4A, NS4B, NS5A and the RNA-directed RNA polymerase embedded in an ER-derived membranous web. Part of the viral assembly initiation complex composed of NS2, E1, E2, NS3, NS4A, NS5A and the mature core protein. Interacts with protease NS2. Interacts with non-structural protein 4A; this interaction stabilizes the folding of NS3 serine protease. NS3-NS4A interaction is essential for NS3 activation and allows membrane anchorage of the latter. NS3/NS4A complex also prevents phosphorylation of host IRF3, thus preventing the establishment of dsRNA induced antiviral state. Interacts with host MAVS; this interaction leads to the cleavage and inhibition of host MAVS. Interacts with host TICAM1; this interaction leads to the cleavage and inhibition of host TICAM1. Interacts with host TANK-binding kinase/TBK1; this interaction results in the inhibition of the association between TBK1 and IRF3, which leads to the inhibition of IRF3 activation. Interacts with host RBM24. Part of the replication complex composed of NS2, NS3, NS4A, NS4B, NS5A and the RNA-directed RNA polymerase embedded in an ER-derived membranous web. Part of the viral assembly initiation complex composed of NS2, E1, E2, NS3, NS4A, NS5A and the mature core protein. As to quaternary structure, interacts with NS3 serine protease; this interaction stabilizes the folding of NS3 serine protease. NS3-NS4A interaction is essential for NS3 activation and allows membrane anchorage of the latter. Interacts with non-structural protein 5A (via N-terminus). Part of the replication complex composed of NS2, NS3, NS4A, NS4B, NS5A and the RNA-directed RNA polymerase embedded in an ER-derived membranous web. Part of the viral assembly initiation complex composed of NS2, E1, E2, NS3, NS4A, NS5A and the mature core protein. In terms of assembly, homomultimer. Interacts with non-structural protein NS5A. Interacts with host PLA2G4C; this interaction likely initiates the recruitment of replication complexes to lipid droplets. Interacts with host STING; this interaction disrupts the interaction between STING and TBK1 thereby suppressing the interferon signaling. Part of the replication complex composed of NS2, NS3, NS4A, NS4B, NS5A and the RNA-directed RNA polymerase embedded in an ER-derived membranous web. Monomer. Homodimer; dimerization is required for RNA-binding. Interacts with the mature core protein. Interacts (via N-terminus) with non-structural protein 4A. Interacts with non-structural protein 4B. Interacts (via region D2) with RNA-directed RNA polymerase. Part of the viral assembly initiation complex composed of NS2, E1, E2, NS3, NS4A, NS5A and the mature core protein. Part of the replication complex composed of NS2, NS3, NS4A, NS4B, NS5A and the RNA-directed RNA polymerase embedded in an ER-derived membranous web. Interacts with host GRB2. Interacts with host BIN1. Interacts with host PIK3R1. Interacts with host SRCAP. Interacts with host FKBP8. Interacts (via C-terminus) with host VAPB (via MSP domain). Interacts with host EIF2AK2/PKR; this interaction leads to disruption of EIF2AK2 dimerization by NS5A and probably allows the virus to evade the innate immune response. Interacts (via N-terminus) with host PACSIN2 (via N-terminus); this interaction attenuates protein kinase C alpha-mediated phosphorylation of PACSIN2 by disrupting the interaction between PACSIN2 and PRKCA. Interacts (via N-terminus) with host SRC kinase (via SH2 domain). Interacts with most Src-family kinases. Interacts with host IFI27 and SKP2; promotes the ubiquitin-mediated proteasomal degradation of NS5A. Interacts with host GPS2. Interacts with host TNFRSF21; this interaction allows the modulation by the virus of JNK, p38 MAPK, STAT3, and Akt signaling pathways in a DR6-dependent manner. Interacts (via N-terminus) with host CIDEB (via N-terminus); this interaction seems to regulate the association of HCV particles with APOE. Interacts with host CHKA/Choline Kinase-alpha; CHKA bridges host PI4KA and NS5A and potentiates NS5A-stimulated PI4KA activity, which then facilitates the targeting of the ternary complex to the ER for viral replication. Interacts with host SPSB2 (via C-terminus); this interaction targets NS5A for ubiquitination and degradation. Interacts with host RAB18; this interaction may promote the association of NS5A and other replicase components with lipid droplets. Interacts (via region D2) with host PPIA/CYPA; the interaction stimulates RNA-binding ability of NS5A and is dependent on the peptidyl-prolyl cis-trans isomerase activity of PPIA/CYPA. Interacts with host TRIM14; this interaction induces the degradation of NS5A. As to quaternary structure, homooligomer. Interacts with non-structural protein 5A. Interacts with host VAPB. Interacts with host PRK2/PKN2. Interacts with host HNRNPA1 and SEPT6; these interactions facilitate viral replication. Part of the replication complex composed of NS2, NS3, NS4A, NS4B, NS5A and the RNA-directed RNA polymerase. Requires Zn(2+) as cofactor. The cofactor is Mg(2+). Post-translationally, specific enzymatic cleavages in vivo yield mature proteins. The structural proteins, core, E1, E2 and p7 are produced by proteolytic processing by host signal peptidases. The core protein precursor is synthesized as a 23 kDa, which is retained in the ER membrane through the hydrophobic signal peptide. Cleavage by the signal peptidase releases the 21 kDa mature core protein. The cleavage of the core protein precursor occurs between aminoacids 176 and 188 but the exact cleavage site is not known. Some degraded forms of the core protein appear as well during the course of infection. The other proteins (p7, NS2, NS3, NS4A, NS4B, NS5A and NS5B) are cleaved by the viral proteases. Autoprocessing between NS2 and NS3 is mediated by the NS2 cysteine protease catalytic domain and regulated by the NS3 N-terminal domain. Phosphorylated by host PKC and PKA. In terms of processing, ubiquitinated; mediated by UBE3A and leading to core protein subsequent proteasomal degradation. Post-translationally, highly N-glycosylated. Palmitoylation is required for NS2/3 autoprocessing and E2 recruitment to membranes. In terms of processing, palmitoylated. This modification may play a role in its polymerization or in protein-protein interactions. Post-translationally, phosphorylated on serines in a basal form termed p56. p58 is a hyperphosphorylated form of p56. p56 and p58 coexist in the cell in roughly equivalent amounts. Hyperphosphorylation is dependent on the presence of NS4A. Host CSNK1A1/CKI-alpha or RPS6KB1 kinases may be responsible for NS5A phosphorylation. Tyrosine phosphorylation is essential for the interaction with host SRC. In terms of processing, the N-terminus is phosphorylated by host PRK2/PKN2.

Its subcellular location is the host endoplasmic reticulum membrane. It localises to the host mitochondrion membrane. The protein resides in the virion. It is found in the host cytoplasm. The protein localises to the host nucleus. Its subcellular location is the host lipid droplet. It localises to the virion membrane. The protein resides in the host mitochondrion. It is found in the host cell membrane. The protein localises to the host perinuclear region. It carries out the reaction Hydrolysis of four peptide bonds in the viral precursor polyprotein, commonly with Asp or Glu in the P6 position, Cys or Thr in P1 and Ser or Ala in P1'.. It catalyses the reaction a ribonucleoside 5'-triphosphate + H2O = a ribonucleoside 5'-diphosphate + phosphate + H(+). The catalysed reaction is ATP + H2O = ADP + phosphate + H(+). The enzyme catalyses RNA(n) + a ribonucleoside 5'-triphosphate = RNA(n+1) + diphosphate. With respect to regulation, inhibited by the antiviral drug hexamethylene amiloride. Inhibited by amantadine. Inhibition by amantadine appears to be genotype-dependent. Also inhibited by long-alkyl-chain iminosugar derivatives. Activity is up-regulated by PRK2/PKN2-mediated phosphorylation. Its function is as follows. Packages viral RNA to form a viral nucleocapsid, and promotes virion budding. Participates in the viral particle production as a result of its interaction with the non-structural protein 5A. Binds RNA and may function as a RNA chaperone to induce the RNA structural rearrangements taking place during virus replication. Modulates viral translation initiation by interacting with viral IRES and 40S ribosomal subunit. Affects various cell signaling pathways, host immunity and lipid metabolism. Prevents the establishment of cellular antiviral state by blocking the interferon-alpha/beta (IFN-alpha/beta) and IFN-gamma signaling pathways and by blocking the formation of phosphorylated STAT1 and promoting ubiquitin-mediated proteasome-dependent degradation of STAT1. Activates STAT3 leading to cellular transformation. Regulates the activity of cellular genes, including c-myc and c-fos. May repress the promoter of p53, and sequester CREB3 and SP110 isoform 3/Sp110b in the cytoplasm. Represses cell cycle negative regulating factor CDKN1A, thereby interrupting an important check point of normal cell cycle regulation. Targets transcription factors involved in the regulation of inflammatory responses and in the immune response: suppresses TNF-induced NF-kappa-B activation, and activates AP-1. Binds to dendritic cells (DCs) via C1QR1, resulting in down-regulation of T-lymphocytes proliferation. Alters lipid metabolism by interacting with hepatocellular proteins involved in lipid accumulation and storage. Induces up-regulation of FAS promoter activity, and thereby contributes to the increased triglyceride accumulation in hepatocytes (steatosis). Functionally, forms a heterodimer with envelope glycoprotein E2, which mediates virus attachment to the host cell, virion internalization through clathrin-dependent endocytosis and fusion with host membrane. Fusion with the host cell is most likely mediated by both E1 and E2, through conformational rearrangements of the heterodimer required for fusion rather than a classical class II fusion mechanism. E1/E2 heterodimer binds host apolipoproteins such as APOB and APOE thereby forming a lipo-viro-particle (LVP). APOE associated to the LVP allows the initial virus attachment to cell surface receptors such as the heparan sulfate proteoglycans (HSPGs), syndecan-1 (SDC1), syndecan-1 (SDC2), the low-density lipoprotein receptor (LDLR) and scavenger receptor class B type I (SCARB1). The cholesterol transfer activity of SCARB1 allows E2 exposure and binding of E2 to SCARB1 and the tetraspanin CD81. E1/E2 heterodimer binding on CD81 activates the epithelial growth factor receptor (EGFR) signaling pathway. Diffusion of the complex E1-E2-EGFR-SCARB1-CD81 to the cell lateral membrane allows further interaction with Claudin 1 (CLDN1) and occludin (OCLN) to finally trigger HCV entry. Forms a heterodimer with envelope glycoprotein E1, which mediates virus attachment to the host cell, virion internalization through clathrin-dependent endocytosis and fusion with host membrane. Fusion with the host cell is most likely mediated by both E1 and E2, through conformational rearrangements of the heterodimer required for fusion rather than a classical class II fusion mechanism. The interaction between envelope glycoprotein E2 and host apolipoprotein E/APOE allows the proper assembly, maturation and infectivity of the viral particles. This interaction is probably promoted via the up-regulation of cellular autophagy by the virus. E1/E2 heterodimer binds host apolipoproteins such as APOB and APOE thereby forming a lipo-viro-particle (LVP). APOE associated to the LVP allows the initial virus attachment to cell surface receptors such as the heparan sulfate proteoglycans (HSPGs), syndecan-1 (SDC1), syndecan-1 (SDC2), the low-density lipoprotein receptor (LDLR) and scavenger receptor class B type I (SCARB1). The cholesterol transfer activity of SCARB1 allows E2 exposure and binding of E2 to SCARB1 and the tetraspanin CD81. E1/E2 heterodimer binding on CD81 activates the epithelial growth factor receptor (EGFR) signaling pathway. Diffusion of the complex E1-E2-EGFR-SCARB1-CD81 to the cell lateral membrane allows further interaction with Claudin 1 (CLDN1) and occludin (OCLN) to finally trigger HCV entry. Inhibits host EIF2AK2/PKR activation, preventing the establishment of an antiviral state. Viral ligand for CD209/DC-SIGN and CLEC4M/DC-SIGNR, which are respectively found on dendritic cells (DCs), and on liver sinusoidal endothelial cells and macrophage-like cells of lymph node sinuses. These interactions allow the capture of circulating HCV particles by these cells and subsequent transmission to permissive cells. Capture of circulating HCV particles by these SIGN+ cells may facilitate virus infection of proximal hepatocytes and lymphocyte subpopulations and may be essential for the establishment of persistent infection. In terms of biological role, ion channel protein that acts as a viroporin and plays an essential role in the assembly, envelopment and secretion of viral particles. Regulates the host cell secretory pathway, which induces the intracellular retention of viral glycoproteins and favors assembly of viral particles. Creates a pore in acidic organelles and releases Ca(2+) and H(+) in the cytoplasm of infected cells, leading to a productive viral infection. High levels of cytoplasmic Ca(2+) may trigger membrane trafficking and transport of viral ER-associated proteins to viroplasms, sites of viral genome replication. This ionic imbalance induces the assembly of the inflammasome complex, which triggers the maturation of pro-IL-1beta into IL-1beta through the action of caspase-1. Targets also host mitochondria and induces mitochondrial depolarization. In addition of its role as a viroporin, acts as a lipid raft adhesion factor. Its function is as follows. Cysteine protease required for the proteolytic auto-cleavage between the non-structural proteins NS2 and NS3. The N-terminus of NS3 is required for the function of NS2 protease (active region NS2-3). Promotes the initiation of viral particle assembly by mediating the interaction between structural and non-structural proteins. Functionally, displays three enzymatic activities: serine protease with a chymotrypsin-like fold, NTPase and RNA helicase. NS3 serine protease, in association with NS4A, is responsible for the cleavages of NS3-NS4A, NS4A-NS4B, NS4B-NS5A and NS5A-NS5B. The NS3/NS4A complex prevents phosphorylation of host IRF3, thus preventing the establishment of dsRNA induced antiviral state. The NS3/NS4A complex induces host amino acid transporter component SLC3A2, thus contributing to HCV propagation. NS3 RNA helicase binds to RNA and unwinds both dsDNA and dsRNA in the 3' to 5' direction, and likely resolves RNA complicated stable secondary structures in the template strand. Binds a single ATP and catalyzes the unzipping of a single base pair of dsRNA. Inhibits host antiviral proteins TBK1 and IRF3 thereby preventing the establishment of an antiviral state. Cleaves host MAVS/CARDIF thereby preventing the establishment of an antiviral state. Cleaves host TICAM1/TRIF, thereby disrupting TLR3 signaling and preventing the establishment of an antiviral state. Induces a specific membrane alteration that serves as a scaffold for the virus replication complex. This membrane alteration gives rise to the so-called ER-derived membranous web that contains the replication complex. NS4B self-interaction contributes to its function in membranous web formation. Promotes host TRIF protein degradation in a CASP8-dependent manner thereby inhibiting host TLR3-mediated interferon signaling. Disrupts the interaction between STING and TBK1 contributing to the inhibition of interferon signaling. In terms of biological role, phosphorylated protein that is indispensable for viral replication and assembly. Both hypo- and hyperphosphorylated states are required for the viral life cycle. The hyperphosphorylated form of NS5A is an inhibitor of viral replication. Involved in RNA-binding and especially in binding to the viral genome. Zinc is essential for RNA-binding. Participates in the viral particle production as a result of its interaction with the mature viral core protein. Its interaction with host VAPB may target the viral replication complex to vesicles. Down-regulates viral IRES translation initiation. Mediates interferon resistance, presumably by interacting with and inhibiting host EIF2AK2/PKR. Prevents BIN1-induced apoptosis. Acts as a transcriptional activator of some host genes important for viral replication when localized in the nucleus. Via the interaction with host PACSIN2, modulates lipid droplet formation in order to promote virion assembly. Modulates TNFRSF21/DR6 signaling pathway for viral propagation. Its function is as follows. RNA-dependent RNA polymerase that performs primer-template recognition and RNA synthesis during viral replication. Initiates RNA transcription/replication at a flavin adenine dinucleotide (FAD), resulting in a 5'- FAD cap on viral RNAs. In this way, recognition of viral 5' RNA by host pattern recognition receptors can be bypassed, thereby evading activation of antiviral pathways. In Hepatitis C virus genotype 1b (strain HC-J4) (HCV), this protein is Genome polyprotein.